The chain runs to 75 residues: Small ribosomal subunit protein bS18 (75 aa).

Belongs to the bacterial ribosomal protein bS18 family. Part of the 30S ribosomal subunit. Forms a tight heterodimer with protein bS6.

Functionally, binds as a heterodimer with protein bS6 to the central domain of the 16S rRNA, where it helps stabilize the platform of the 30S subunit. The protein is Small ribosomal subunit protein bS18 of Cellvibrio japonicus (strain Ueda107) (Pseudomonas fluorescens subsp. cellulosa).